Consider the following 624-residue polypeptide: Polygalacturonase 1 beta-like protein 2 (624 aa).

The first 26 residues, 1–26 (MNNIEATLFLCFFCIFSSSNVHFAGA), serve as a signal peptide directing secretion. The FXXY 1 repeat unit spans residues 121-124 (FAAY). N-linked (GlcNAc...) asparagine glycosylation occurs at asparagine 128. FXXY repeat units lie at residues 129–132 (FTNY), 143–146 (FKNY), 157–160 (FRRY), 171–174 (FTNY), 185–188 (FTTY), 199–202 (FTNY), 213–216 (FTSY), 227–230 (FTTY), 241–244 (FTSY), 255–258 (FSGY), and 269–272 (FTKY). The N-linked (GlcNAc...) asparagine glycan is linked to asparagine 145. Residues 199 to 219 (FTNYNTDANEPNGRFTSYSDK) are disordered. N-linked (GlcNAc...) asparagine glycosylation occurs at asparagine 280. 5 FXXY repeats span residues 283–286 (FTSY), 297–300 (FKGY), 311–314 (FKNY), 325–328 (FSSY), and 339–342 (FVNY). Asparagine 352 carries an N-linked (GlcNAc...) asparagine glycan. The stretch at 353–356 (FTGY) is one FXXY 18 repeat. Asparagine 364 is a glycosylation site (N-linked (GlcNAc...) asparagine). 3 FXXY repeats span residues 367 to 370 (FKTY), 376 to 379 (FKVY), and 386 to 389 (FARY). N-linked (GlcNAc...) asparagine glycosylation is found at asparagine 392 and asparagine 463. The BURP domain occupies 409–623 (FFREAMLKEG…FENDMTWNII (215 aa)).

In terms of tissue distribution, expressed in flowers and stems.

It is found in the secreted. Its subcellular location is the extracellular space. It localises to the apoplast. The protein resides in the cell wall. Functionally, involved in cell size determination. The sequence is that of Polygalacturonase 1 beta-like protein 2 from Arabidopsis thaliana (Mouse-ear cress).